Here is a 199-residue protein sequence, read N- to C-terminus: Pre T-cell antigen receptor alpha (199 aa).

An N-terminal signal peptide occupies residues 1 to 16 (MARTWLLLFLGLRCQA). Over 17–155 (LPSGIAGTPF…RQVLRLSVLR (139 aa)) the chain is Extracellular. Cysteine 47 and cysteine 107 form a disulfide bridge. 2 N-linked (GlcNAc...) asparagine glycosylation sites follow: asparagine 67 and asparagine 117. Residues 117 to 139 (NRSTHPLQLSGEEASTDRTCPQE) are disordered. Residues 156–176 (LLLFKLLLLDVFLTCSRLCVL) form a helical membrane-spanning segment. Topologically, residues 177-199 (AGQHLLPPPSSKQAPASTHQSWT) are cytoplasmic.

In terms of assembly, heterodimer with TCRB; disulfide linked. This heterodimer assembles with CD3 proteins into a signaling-competent pre-T-cell receptor complex. Interacts with RHBDD1. As to expression, found in CD45+ but not in the CD45- fetal liver cells.

It is found in the membrane. Its subcellular location is the cell membrane. Functionally, component of the pre-T-cell receptor complex (composed of PTCRA, TCRB and the CD3 complex) that has a crucial role in early T-cell development, particularly alpha-beta T cell differentiation. In Rattus norvegicus (Rat), this protein is Pre T-cell antigen receptor alpha.